Consider the following 340-residue polypeptide: 4-hydroxy-3-methylbut-2-enyl diphosphate reductase (340 aa).

Cys-21 contributes to the [4Fe-4S] cluster binding site. The (2E)-4-hydroxy-3-methylbut-2-enyl diphosphate site is built by His-50 and His-83. Residues His-50 and His-83 each contribute to the dimethylallyl diphosphate site. His-50 and His-83 together coordinate isopentenyl diphosphate. Residue Cys-105 participates in [4Fe-4S] cluster binding. His-133 contacts (2E)-4-hydroxy-3-methylbut-2-enyl diphosphate. His-133 is a binding site for dimethylallyl diphosphate. His-133 lines the isopentenyl diphosphate pocket. Glu-135 acts as the Proton donor in catalysis. Thr-173 serves as a coordination point for (2E)-4-hydroxy-3-methylbut-2-enyl diphosphate. Residue Cys-203 coordinates [4Fe-4S] cluster. (2E)-4-hydroxy-3-methylbut-2-enyl diphosphate is bound by residues Ser-231, Ser-232, Asn-233, and Ser-276. 4 residues coordinate dimethylallyl diphosphate: Ser-231, Ser-232, Asn-233, and Ser-276. Residues Ser-231, Ser-232, Asn-233, and Ser-276 each contribute to the isopentenyl diphosphate site. A disordered region spans residues 320 to 340 (KARGEPLTRSATAGDRMNADR).

Belongs to the IspH family. [4Fe-4S] cluster serves as cofactor.

The catalysed reaction is isopentenyl diphosphate + 2 oxidized [2Fe-2S]-[ferredoxin] + H2O = (2E)-4-hydroxy-3-methylbut-2-enyl diphosphate + 2 reduced [2Fe-2S]-[ferredoxin] + 2 H(+). It carries out the reaction dimethylallyl diphosphate + 2 oxidized [2Fe-2S]-[ferredoxin] + H2O = (2E)-4-hydroxy-3-methylbut-2-enyl diphosphate + 2 reduced [2Fe-2S]-[ferredoxin] + 2 H(+). It functions in the pathway isoprenoid biosynthesis; dimethylallyl diphosphate biosynthesis; dimethylallyl diphosphate from (2E)-4-hydroxy-3-methylbutenyl diphosphate: step 1/1. It participates in isoprenoid biosynthesis; isopentenyl diphosphate biosynthesis via DXP pathway; isopentenyl diphosphate from 1-deoxy-D-xylulose 5-phosphate: step 6/6. Functionally, catalyzes the conversion of 1-hydroxy-2-methyl-2-(E)-butenyl 4-diphosphate (HMBPP) into a mixture of isopentenyl diphosphate (IPP) and dimethylallyl diphosphate (DMAPP). Acts in the terminal step of the DOXP/MEP pathway for isoprenoid precursor biosynthesis. In Acidothermus cellulolyticus (strain ATCC 43068 / DSM 8971 / 11B), this protein is 4-hydroxy-3-methylbut-2-enyl diphosphate reductase.